We begin with the raw amino-acid sequence, 127 residues long: Methylglyoxal synthase (127 aa).

One can recognise an MGS-like domain in the interval 1–127; the sequence is MEKKIALIAH…IKGLESLILR (127 aa). Residues H10, K14, 36–39, and 56–57 contribute to the substrate site; these read TGTT and SG. The active-site Proton donor/acceptor is the D62. H89 provides a ligand contact to substrate.

It belongs to the methylglyoxal synthase family.

The catalysed reaction is dihydroxyacetone phosphate = methylglyoxal + phosphate. Catalyzes the formation of methylglyoxal from dihydroxyacetone phosphate. The chain is Methylglyoxal synthase from Borreliella afzelii (strain PKo) (Borrelia afzelii).